We begin with the raw amino-acid sequence, 124 residues long: Large ribosomal subunit protein uL18 (124 aa).

It belongs to the universal ribosomal protein uL18 family. Part of the 50S ribosomal subunit; part of the 5S rRNA/L5/L18/L25 subcomplex. Contacts the 5S and 23S rRNAs.

In terms of biological role, this is one of the proteins that bind and probably mediate the attachment of the 5S RNA into the large ribosomal subunit, where it forms part of the central protuberance. In Orientia tsutsugamushi (strain Ikeda) (Rickettsia tsutsugamushi), this protein is Large ribosomal subunit protein uL18.